A 64-amino-acid polypeptide reads, in one-letter code: Large ribosomal subunit protein uL29 (64 aa).

Belongs to the universal ribosomal protein uL29 family.

In Nitratiruptor sp. (strain SB155-2), this protein is Large ribosomal subunit protein uL29.